A 567-amino-acid chain; its full sequence is Dynein, 70 kDa intermediate chain, flagellar outer arm (567 aa).

WD repeat units follow at residues 214 to 254 (VPTS…GPVE), 261 to 302 (SHRD…ECVE), 360 to 399 (GHHG…KTPI), and 404 to 444 (YHPT…NEPT).

This sequence belongs to the dynein intermediate chain family. In terms of assembly, consists of at least 3 heavy chains (alpha, beta and gamma), 2 intermediate chains and 8 light chains.

Its subcellular location is the cytoplasm. The protein resides in the cytoskeleton. The protein localises to the flagellum axoneme. Functionally, may play a role in regulating dynein heavy chain (DHC) activity. May function in holding IC78 to the DHC, or in stabilizing the entire dynein complex. The protein is Dynein, 70 kDa intermediate chain, flagellar outer arm (ODA6) of Chlamydomonas reinhardtii (Chlamydomonas smithii).